Here is a 361-residue protein sequence, read N- to C-terminus: Protein YIM1-2 (361 aa).

It belongs to the YIM1 family.

Its subcellular location is the lipid droplet. It is found in the mitochondrion. The protein is Protein YIM1-2 (YIM1-2) of Lachancea thermotolerans (strain ATCC 56472 / CBS 6340 / NRRL Y-8284) (Yeast).